The chain runs to 324 residues: Cytochrome f (324 aa).

The N-terminal stretch at 1–30 (MNMRFSPKALVRQLGRLSLVACLSLGLLGA) is a signal peptide. 4 residues coordinate heme: Y42, C62, C65, and H66. The chain crosses the membrane as a helical span at residues 290–310 (VLGVIAFFFAVMLAQIMLVLK).

Belongs to the cytochrome f family. The 4 large subunits of the cytochrome b6-f complex are cytochrome b6, subunit IV (17 kDa polypeptide, PetD), cytochrome f and the Rieske protein, while the 4 small subunits are PetG, PetL, PetM and PetN. The complex functions as a dimer. The cofactor is heme.

Its subcellular location is the cellular thylakoid membrane. Functionally, component of the cytochrome b6-f complex, which mediates electron transfer between photosystem II (PSII) and photosystem I (PSI), cyclic electron flow around PSI, and state transitions. The sequence is that of Cytochrome f from Synechococcus elongatus (strain ATCC 33912 / PCC 7942 / FACHB-805) (Anacystis nidulans R2).